Reading from the N-terminus, the 85-residue chain is SPbeta prophage-derived uncharacterized protein YoqG (85 aa).

The sequence is that of SPbeta prophage-derived uncharacterized protein YoqG (yoqG) from Bacillus subtilis (strain 168).